A 384-amino-acid polypeptide reads, in one-letter code: Bifunctional enzyme IspD/IspF (384 aa).

The interval 1-226 is 2-C-methyl-D-erythritol 4-phosphate cytidylyltransferase; sequence MAKTVVLVVA…RCLFDGPGEV (226 aa). Positions 227-384 are 2-C-methyl-D-erythritol 2,4-cyclodiphosphate synthase; sequence RSASGYDVHR…QAMASVWLPR (158 aa). 2 residues coordinate a divalent metal cation: aspartate 233 and histidine 235. 4-CDP-2-C-methyl-D-erythritol 2-phosphate-binding positions include 233–235 and 260–261; these read DVH and HS. Histidine 268 provides a ligand contact to a divalent metal cation. Residues 282 to 284, 358 to 361, phenylalanine 365, and arginine 368 contribute to the 4-CDP-2-C-methyl-D-erythritol 2-phosphate site; these read DIG and TTTE.

The protein in the N-terminal section; belongs to the IspD/TarI cytidylyltransferase family. IspD subfamily. It in the C-terminal section; belongs to the IspF family. Requires a divalent metal cation as cofactor.

It catalyses the reaction 2-C-methyl-D-erythritol 4-phosphate + CTP + H(+) = 4-CDP-2-C-methyl-D-erythritol + diphosphate. The enzyme catalyses 4-CDP-2-C-methyl-D-erythritol 2-phosphate = 2-C-methyl-D-erythritol 2,4-cyclic diphosphate + CMP. It functions in the pathway isoprenoid biosynthesis; isopentenyl diphosphate biosynthesis via DXP pathway; isopentenyl diphosphate from 1-deoxy-D-xylulose 5-phosphate: step 2/6. Its pathway is isoprenoid biosynthesis; isopentenyl diphosphate biosynthesis via DXP pathway; isopentenyl diphosphate from 1-deoxy-D-xylulose 5-phosphate: step 4/6. In terms of biological role, bifunctional enzyme that catalyzes the formation of 4-diphosphocytidyl-2-C-methyl-D-erythritol from CTP and 2-C-methyl-D-erythritol 4-phosphate (MEP) (IspD), and catalyzes the conversion of 4-diphosphocytidyl-2-C-methyl-D-erythritol 2-phosphate (CDP-ME2P) to 2-C-methyl-D-erythritol 2,4-cyclodiphosphate (ME-CPP) with a corresponding release of cytidine 5-monophosphate (CMP) (IspF). The polypeptide is Bifunctional enzyme IspD/IspF (Paramagnetospirillum magneticum (strain ATCC 700264 / AMB-1) (Magnetospirillum magneticum)).